Consider the following 296-residue polypeptide: Protease HtpX homolog (296 aa).

Helical transmembrane passes span 7 to 27 and 29 to 49; these read TVLLLGVLTGLFLAIGHLVAG and QGMIIAFVVALFMNFFSYFFS. H131 provides a ligand contact to Zn(2+). E132 is a catalytic residue. Residue H135 coordinates Zn(2+). A run of 2 helical transmembrane segments spans residues 141–161 and 178–198; these read ILISSIAATIGGAISMLANMA and IASIIGSIILFIVAPLAATLI. E207 contributes to the Zn(2+) binding site.

The protein belongs to the peptidase M48B family. The cofactor is Zn(2+).

Its subcellular location is the cell inner membrane. The chain is Protease HtpX homolog from Sulfurihydrogenibium sp. (strain YO3AOP1).